A 323-amino-acid chain; its full sequence is Elongation factor P--(R)-beta-lysine ligase (323 aa).

74-76 (SPE) contacts substrate. Residues 98–100 (RNE) and N107 each bind ATP. Y116 is a binding site for substrate. Residue 242–243 (EL) participates in ATP binding. Residue E249 participates in substrate binding. G298 contacts ATP.

Belongs to the class-II aminoacyl-tRNA synthetase family. EpmA subfamily. As to quaternary structure, homodimer.

It catalyses the reaction D-beta-lysine + L-lysyl-[protein] + ATP = N(6)-((3R)-3,6-diaminohexanoyl)-L-lysyl-[protein] + AMP + diphosphate + H(+). Functionally, with EpmB is involved in the beta-lysylation step of the post-translational modification of translation elongation factor P (EF-P). Catalyzes the ATP-dependent activation of (R)-beta-lysine produced by EpmB, forming a lysyl-adenylate, from which the beta-lysyl moiety is then transferred to the epsilon-amino group of a conserved specific lysine residue in EF-P. This Photobacterium profundum (strain SS9) protein is Elongation factor P--(R)-beta-lysine ligase.